Reading from the N-terminus, the 648-residue chain is MRIAKILLPVAKLFPLDYLIPEDLELNIGDLVVVPFRNKELTGIVWELVSNSEAKKIKTIRVKVPLNLNITSEVLELIKWMSSYYMSELGSIAKLVLPMDIAEKPIKVKEQKVNNNFVLPDLSEEQKQAVTILNESNKPTLVKGVTGSGKTEIYFHLIADYLAKGKQVLVMLPEIALSTQIINRFIERFGFEPIIWNSSVTKAHKKMILRGILSDKVKVVIGARSSLFLPFKNLGLIVIDEEHDDSYKQDDGILYNARDTAIVRGTFDKAQIVLCSATPSIETIHNIEIGKYQLVTLVNRYKNVDLPNIEIIDMTKEKLSKNSYLSKLLIEAIKGNLDNKKQVLLFLNRRGYAPLMLCKACGYRLTCKFCSSWMVVHKATKKLECHHCGYQSKIFSSCPECLEDETLTICGPGIERIEEEAKALFPESKIAVISKDHAKSPEKIAQLLHQMENLEIDILIGTQIITKGYHFPNLTLVGVIDADLGSNNADLRASERTFQLLHQVGGRAGRGDSKGVVYLQSYYPDNTIFSYVKAGDEDSFFANELEIRKSADMPPFSKTASVILSGSSEAKILEIARDMVRIAPKANVKILGPASSLMSKLAGKYRYRILIIANKKFNLQKYLKFWLSLIKIPSFCHLKIDIDPKSFY.

One can recognise a Helicase ATP-binding domain in the interval threonine 131–leucine 297. Position 144 to 151 (glycine 144 to threonine 151) interacts with ATP. The DEAH box signature appears at aspartate 240–histidine 243. The Zn(2+) site is built by cysteine 358, cysteine 361, cysteine 367, cysteine 370, cysteine 385, cysteine 388, cysteine 398, and cysteine 401. The Helicase C-terminal domain occupies lysine 393–arginine 548.

This sequence belongs to the helicase family. PriA subfamily. In terms of assembly, component of the replication restart primosome. Zn(2+) is required as a cofactor.

It catalyses the reaction Couples ATP hydrolysis with the unwinding of duplex DNA by translocating in the 3'-5' direction.. The enzyme catalyses ATP + H2O = ADP + phosphate + H(+). Initiates the restart of stalled replication forks, which reloads the replicative helicase on sites other than the origin of replication. Recognizes and binds to abandoned replication forks and remodels them to uncover a helicase loading site. Promotes assembly of the primosome at these replication forks. The chain is Replication restart protein PriA from Rickettsia conorii (strain ATCC VR-613 / Malish 7).